Here is a 132-residue protein sequence, read N- to C-terminus: Small ribosomal subunit protein uS8 (132 aa).

This sequence belongs to the universal ribosomal protein uS8 family. Part of the 30S ribosomal subunit. Contacts proteins S5 and S12.

Its function is as follows. One of the primary rRNA binding proteins, it binds directly to 16S rRNA central domain where it helps coordinate assembly of the platform of the 30S subunit. The protein is Small ribosomal subunit protein uS8 of Tropheryma whipplei (strain Twist) (Whipple's bacillus).